Consider the following 94-residue polypeptide: Protein RESPONSE TO LOW SULFUR 1 (94 aa).

Residues Val-8–Glu-35 adopt a coiled-coil conformation.

In Arabidopsis thaliana (Mouse-ear cress), this protein is Protein RESPONSE TO LOW SULFUR 1.